The sequence spans 190 residues: Female-specific histamine-binding protein 1 (190 aa).

Positions 1-18 (MKLLLSLAFVLALSQVKA) are cleaved as a signal peptide. 7 residues coordinate histamine: tyrosine 54, aspartate 57, tryptophan 60, glutamate 100, tyrosine 118, glutamate 153, and tryptophan 155. 2 disulfides stabilise this stretch: cysteine 66-cysteine 187 and cysteine 137-cysteine 166.

This sequence belongs to the calycin superfamily. Histamine-binding salivary protein family. As to quaternary structure, monomer. Expressed in salivary glands.

Its subcellular location is the secreted. In terms of biological role, salivary tick protein that acts by scavenging histamine at the wound site, outcompeting histamine receptors for histamine, thereby overcoming host inflammatory responses. Binds histamine with a high-affinity (Kd=18 nM). Contains two binding histamine sites (H and L), that appear to bind histamine with differing affinities (high and low). In vivo, when tested on a mouse asthma model, shows a profound inhibitory effect on allergic asthma. Aerosol administration of this protein prevents airway hyperreactivity and abrogates peribronchial inflammation, eosinophil recruitment, mucus hypersecretion, and interleukins (IL-4 and IL-5) secretion. In addition, when tested on a mouse model of acute respiratory distress syndrome (ARDS), it attenuates endotoxin-induced acute lung injury. The chain is Female-specific histamine-binding protein 1 from Rhipicephalus appendiculatus (Brown ear tick).